Here is a 365-residue protein sequence, read N- to C-terminus: Nudix hydrolase 24, chloroplastic (365 aa).

Residues 1–30 (MASAFCSLCPTPTSLFSSHALIPTLQWRSS) constitute a chloroplast transit peptide. The region spanning 196 to 337 (GYAIHVNGYV…KDSCSLVIID (142 aa)) is the Nudix hydrolase domain. The Nudix box motif lies at 235–256 (GGLPHGISVCENLVKECEEEAG). Mg(2+) contacts are provided by Glu250 and Glu254.

This sequence belongs to the Nudix hydrolase family. The cofactor is Mg(2+). Mn(2+) serves as cofactor. As to expression, expressed in leaves.

Its subcellular location is the plastid. The protein localises to the chloroplast. Functionally, probably mediates the hydrolysis of some nucleoside diphosphate derivatives. This is Nudix hydrolase 24, chloroplastic (NUDT24) from Arabidopsis thaliana (Mouse-ear cress).